Reading from the N-terminus, the 255-residue chain is Hydroxyacylglutathione hydrolase (255 aa).

Positions 56, 58, 60, 61, 114, 133, and 171 each coordinate Zn(2+).

It belongs to the metallo-beta-lactamase superfamily. Glyoxalase II family. In terms of assembly, monomer. Zn(2+) serves as cofactor.

It catalyses the reaction an S-(2-hydroxyacyl)glutathione + H2O = a 2-hydroxy carboxylate + glutathione + H(+). The protein operates within secondary metabolite metabolism; methylglyoxal degradation; (R)-lactate from methylglyoxal: step 2/2. Thiolesterase that catalyzes the hydrolysis of S-D-lactoyl-glutathione to form glutathione and D-lactic acid. This Rhodopseudomonas palustris (strain BisA53) protein is Hydroxyacylglutathione hydrolase.